Consider the following 145-residue polypeptide: Alpha-amylase/trypsin inhibitor CMa (145 aa).

A signal peptide spans 1-25 (MASKSSITPLLLAAVLASVFAAATA).

It belongs to the protease inhibitor I6 (cereal trypsin/alpha-amylase inhibitor) family. Heterotetramer of one CMa, one CMb and two CMd chains. Five disulfide bonds, which are essential for the inhibitor activity, are probably present. As to expression, endosperm.

The protein localises to the secreted. Its function is as follows. Alpha-amylase/trypsin inhibitor. It could be involved in insect defense mechanisms. The chain is Alpha-amylase/trypsin inhibitor CMa (IAT1) from Hordeum vulgare (Barley).